A 354-amino-acid chain; its full sequence is Green-sensitive opsin-3 (354 aa).

The Extracellular portion of the chain corresponds to 1–39 (MSGLNGFEGDNFYIPMSNRTGLVRDPFVYEQYYLAEPWQ). Asn-18 is a glycosylation site (N-linked (GlcNAc...) asparagine). A helical membrane pass occupies residues 40 to 64 (FKLLACYMFFLICLGLPINGFTLFV). Over 65–76 (TAQHKKLQQPLN) the chain is Cytoplasmic. A helical transmembrane segment spans residues 77–102 (FILVNLAVAGMIMVCFGFTITISSAV). Over 103 to 116 (NGYFYFGPTACAIE) the chain is Extracellular. Residues Cys-113 and Cys-190 are joined by a disulfide bond. A helical transmembrane segment spans residues 117 to 136 (GFMATLGGEVALWSLVVLAI). Topologically, residues 137–155 (ERYIVVCKPMGSFKFSASH) are cytoplasmic. A helical transmembrane segment spans residues 156–179 (ALGGIGFTWFMAMTCAAPPLVGWS). At 180–205 (RYIPEGLQCSCGPDYYTLNPKYNNES) the chain is on the extracellular side. Asn-203 is a glycosylation site (N-linked (GlcNAc...) asparagine). The chain crosses the membrane as a helical span at residues 206 to 233 (YVIYMFVVHFIVPVTVIFFTYGRLVCTV). The Cytoplasmic segment spans residues 234 to 255 (KSAAAAQQDSASTQKAEKEVTR). A helical membrane pass occupies residues 256 to 279 (MVILMVVGFLVAWTPYATVAAWIF). The Extracellular segment spans residues 280-287 (FNKGAAFT). Residues 288 to 312 (AQFMAVPAFFSKSSALFNPIIYVLL) traverse the membrane as a helical segment. Lys-299 carries the N6-(retinylidene)lysine modification. Residues 313–354 (NKQFRNCMLTTLFCGKNPLGDEESSTVSTKTEVSTVSSVSPA) are Cytoplasmic-facing.

The protein belongs to the G-protein coupled receptor 1 family. Opsin subfamily. The color pigments are found in the cone photoreceptor cells.

It is found in the membrane. Visual pigments are the light-absorbing molecules that mediate vision. They consist of an apoprotein, opsin, covalently linked to cis-retinal. The chain is Green-sensitive opsin-3 (RH11) from Psalidodon fasciatus (Banded astyanax).